Reading from the N-terminus, the 453-residue chain is Nuclear hormone receptor family member nhr-12 (453 aa).

The disordered stretch occupies residues 1 to 37 (MEQIPQEQKTEPFLASFTTTEKLGTETPTTSITPNTQ). Positions 18–36 (TTTEKLGTETPTTSITPNT) are enriched in low complexity. Residues 44–119 (KPNCAVCNEV…VGMNPECVQN (76 aa)) constitute a DNA-binding region (nuclear receptor). NR C4-type zinc fingers lie at residues 47–67 (CAVC…CRAC) and 83–107 (CRAG…YDKC). The NR LBD domain occupies 178 to 451 (FSPASLPGLS…ENFVNIINGK (274 aa)).

The protein belongs to the nuclear hormone receptor family.

It localises to the nucleus. Its function is as follows. Orphan nuclear receptor. This chain is Nuclear hormone receptor family member nhr-12 (nhr-12), found in Caenorhabditis elegans.